The primary structure comprises 641 residues: Threonine--tRNA ligase (641 aa).

The TGS domain occupies 1–61; the sequence is MIKINLLNHQ…TQDGDLEILA (61 aa). The segment at 240 to 538 is catalytic; that stretch reads DHKRLNKKLD…LIEENKGVFP (299 aa). Residues cysteine 334, histidine 385, and histidine 515 each contribute to the Zn(2+) site.

It belongs to the class-II aminoacyl-tRNA synthetase family. In terms of assembly, homodimer. Zn(2+) is required as a cofactor.

Its subcellular location is the cytoplasm. The enzyme catalyses tRNA(Thr) + L-threonine + ATP = L-threonyl-tRNA(Thr) + AMP + diphosphate + H(+). Functionally, catalyzes the attachment of threonine to tRNA(Thr) in a two-step reaction: L-threonine is first activated by ATP to form Thr-AMP and then transferred to the acceptor end of tRNA(Thr). Also edits incorrectly charged L-seryl-tRNA(Thr). This chain is Threonine--tRNA ligase, found in Phytoplasma australiense.